Consider the following 338-residue polypeptide: RNA 3'-terminal phosphate cyclase (338 aa).

ATP is bound by residues glutamine 103 and 283-287 (YLADQ). The Tele-AMP-histidine intermediate role is filled by histidine 308.

This sequence belongs to the RNA 3'-terminal cyclase family. Type 1 subfamily.

It localises to the cytoplasm. The catalysed reaction is a 3'-end 3'-phospho-ribonucleotide-RNA + ATP = a 3'-end 2',3'-cyclophospho-ribonucleotide-RNA + AMP + diphosphate. In terms of biological role, catalyzes the conversion of 3'-phosphate to a 2',3'-cyclic phosphodiester at the end of RNA. The mechanism of action of the enzyme occurs in 3 steps: (A) adenylation of the enzyme by ATP; (B) transfer of adenylate to an RNA-N3'P to produce RNA-N3'PP5'A; (C) and attack of the adjacent 2'-hydroxyl on the 3'-phosphorus in the diester linkage to produce the cyclic end product. The biological role of this enzyme is unknown but it is likely to function in some aspects of cellular RNA processing. In Escherichia coli O6:H1 (strain CFT073 / ATCC 700928 / UPEC), this protein is RNA 3'-terminal phosphate cyclase.